We begin with the raw amino-acid sequence, 129 residues long: Transcriptional regulator WhiB2 (129 aa).

The tract at residues 23–45 is disordered; it reads SHAPHIDTGSTPTGAAGRPQLSL. The 4Fe-4S Wbl-type domain maps to 66–123; it reads LCAQTDPEAFFPEKGGSTREAKRICQGCEVRDACLEYALAHDERFGIWGGLSERERRR. Residues Cys-67, Cys-90, Cys-93, and Cys-99 each coordinate [4Fe-4S] cluster.

This sequence belongs to the WhiB family. [4Fe-4S] cluster is required as a cofactor. The Fe-S cluster can be nitrosylated by nitric oxide (NO). In terms of processing, upon Fe-S cluster removal intramolecular disulfide bonds are formed.

It localises to the cytoplasm. Functionally, acts as a transcriptional regulator. Probably redox-responsive. The apo- but not holo-form probably binds DNA. The sequence is that of Transcriptional regulator WhiB2 (whiB2) from Mycolicibacterium smegmatis (strain ATCC 700084 / mc(2)155) (Mycobacterium smegmatis).